The following is a 465-amino-acid chain: Cysteine--tRNA ligase (465 aa).

Residue C27 coordinates Zn(2+). The short motif at 29–39 is the 'HIGH' region element; the sequence is PTVYNFFHIGN. Positions 207, 232, and 236 each coordinate Zn(2+). A 'KMSKS' region motif is present at residues 264–268; it reads KMSKS. Residue K267 participates in ATP binding.

The protein belongs to the class-I aminoacyl-tRNA synthetase family. Monomer. Requires Zn(2+) as cofactor.

The protein localises to the cytoplasm. It catalyses the reaction tRNA(Cys) + L-cysteine + ATP = L-cysteinyl-tRNA(Cys) + AMP + diphosphate. This Clostridium botulinum (strain Langeland / NCTC 10281 / Type F) protein is Cysteine--tRNA ligase.